Here is a 548-residue protein sequence, read N- to C-terminus: C2H2-type transcription factor MSN2 (548 aa).

2 C2H2-type zinc fingers span residues 420 to 448 and 449 to 471; these read FKCELCDRRFRRQEHLKRHYRSLHTQDKP and FECNECGKKFSRSDNLTQHARTH.

In terms of assembly, interacts with HOG1/OSM1.

It localises to the nucleus. Its subcellular location is the cytoplasm. Transcription factor that acts as a key downstream transcription factor in the HOG1-MAPK pathway. Regulates the expression of a series of downstream genes and controls vegetative growth, conidiogenesis, cell wall integrity, stress response, mitochondrial morphology, and pathogenicity. Binds to a putative promoter region 1500 bp upstream of the start codons of the target genes MGG_07019, POX1 and DCI1. Binds to the AGGGG and CCCCT motif of the COS1 promoter region. Involved in fatty acid beta-oxidation by directly regulating the expression of the dienoyl-CoA isomerase DCI1, thereby facilitating invasive hyphal growth during the early infection stage. Targets also the 3-methylglutaconyl-CoA hydratase-encoding gene (AUH1) to control mitochondrial morphology and mitophagy, which are critical for the infectious growth of the pathogen. The protein is C2H2-type transcription factor MSN2 of Pyricularia oryzae (strain 70-15 / ATCC MYA-4617 / FGSC 8958) (Rice blast fungus).